An 87-amino-acid polypeptide reads, in one-letter code: Exodeoxyribonuclease 7 small subunit (87 aa).

Belongs to the XseB family. Heterooligomer composed of large and small subunits.

The protein resides in the cytoplasm. It catalyses the reaction Exonucleolytic cleavage in either 5'- to 3'- or 3'- to 5'-direction to yield nucleoside 5'-phosphates.. Its function is as follows. Bidirectionally degrades single-stranded DNA into large acid-insoluble oligonucleotides, which are then degraded further into small acid-soluble oligonucleotides. This is Exodeoxyribonuclease 7 small subunit from Pelotomaculum thermopropionicum (strain DSM 13744 / JCM 10971 / SI).